The sequence spans 202 residues: Holliday junction branch migration complex subunit RuvA (202 aa).

A domain I region spans residues 1–64 (MIGRLSGTLL…EDAHLLFGFA (64 aa)). Residues 65–143 (GRAERELFRQ…SLPSADLLSP (79 aa)) are domain II. Residues 144-152 (APAAGAALL) are flexible linker. A domain III region spans residues 153–202 (VENDERADISQALQALGYSAREAEAALKSVPDGTDVATGIRLALKALARP).

It belongs to the RuvA family. Homotetramer. Forms an RuvA(8)-RuvB(12)-Holliday junction (HJ) complex. HJ DNA is sandwiched between 2 RuvA tetramers; dsDNA enters through RuvA and exits via RuvB. An RuvB hexamer assembles on each DNA strand where it exits the tetramer. Each RuvB hexamer is contacted by two RuvA subunits (via domain III) on 2 adjacent RuvB subunits; this complex drives branch migration. In the full resolvosome a probable DNA-RuvA(4)-RuvB(12)-RuvC(2) complex forms which resolves the HJ.

Its subcellular location is the cytoplasm. Its function is as follows. The RuvA-RuvB-RuvC complex processes Holliday junction (HJ) DNA during genetic recombination and DNA repair, while the RuvA-RuvB complex plays an important role in the rescue of blocked DNA replication forks via replication fork reversal (RFR). RuvA specifically binds to HJ cruciform DNA, conferring on it an open structure. The RuvB hexamer acts as an ATP-dependent pump, pulling dsDNA into and through the RuvAB complex. HJ branch migration allows RuvC to scan DNA until it finds its consensus sequence, where it cleaves and resolves the cruciform DNA. The sequence is that of Holliday junction branch migration complex subunit RuvA from Laribacter hongkongensis (strain HLHK9).